The primary structure comprises 354 residues: Membrane progestin receptor beta (354 aa).

At 1 to 76 (MTTAILERLS…FSLFQKHNEV (76 aa)) the chain is on the cytoplasmic side. The helical transmembrane segment at 77–97 (VNVWTHLLAALAVLLRFWAFV) threads the bilayer. The Extracellular portion of the chain corresponds to 98–111 (EAGALQWASPHTLP). The chain crosses the membrane as a helical span at residues 112-132 (LLLFILSSITYLTCSLLAHLL). Over 133–173 (QSKSELSHYTFYFVDYVGVSVYQYGSALAHFFYSSDQAWYE) the chain is Cytoplasmic. The chain crosses the membrane as a helical span at residues 174 to 194 (LFWIFFLPAAAFCGWLSCAGC). Residues 195 to 213 (CYAKYRYRRPYPVMRKICQ) are Extracellular-facing. Residues 214–234 (VVPAGLAFVLDISPVAHRVAL) traverse the membrane as a helical segment. At 235–243 (CHLAGCQEQ) the chain is on the cytoplasmic side. A helical transmembrane segment spans residues 244 to 264 (AAWYHTLQILFFLVSAYFFSC). The Extracellular portion of the chain corresponds to 265-283 (PVPEKYFPGSCDIVGHGHQ). The chain crosses the membrane as a helical span at residues 284–304 (IFHAFLSVCTLSQLEAILLDY). At 305–315 (QGRHEIFLQRH) the chain is on the cytoplasmic side. A helical transmembrane segment spans residues 316 to 336 (GPLSVYSACLSFFVLAACSAA). Residues 337-354 (TATLLRHKVKDRLIKKDS) lie on the Extracellular side of the membrane.

It belongs to the ADIPOR family. Expressed in brain and testis.

Its subcellular location is the cell membrane. Functionally, plasma membrane progesterone (P4) receptor coupled to G proteins. Seems to act through a G(i) mediated pathway. May be involved in oocyte maturation. Also binds dehydroepiandrosterone (DHEA), pregnanolone, pregnenolone and allopregnanolone. The sequence is that of Membrane progestin receptor beta from Mus musculus (Mouse).